A 500-amino-acid chain; its full sequence is Protein FAM83F (500 aa).

Ala2 bears the N-acetylalanine mark. The DUF1669 stretch occupies residues Ala2 to Leu300. Ser4 is modified (phosphoserine). Disordered regions lie at residues Asn82 to Pro109, Gln347 to Glu366, and Ile391 to Ser500. The span at Ser397–Pro419 shows a compositional bias: basic and acidic residues. Low complexity-rich tracts occupy residues Gly425–Leu442 and Ser458–Glu468. Residues Glu477–Ser500 show a composition bias toward polar residues. Ser479 carries the post-translational modification Phosphoserine.

It belongs to the FAM83 family. As to quaternary structure, directly interacts (via DUF1669) with CSNK1A1 and CSNK1A1L.

The protein resides in the cell membrane. The protein is Protein FAM83F (FAM83F) of Homo sapiens (Human).